A 382-amino-acid chain; its full sequence is Mannitol-1-phosphate 5-dehydrogenase (382 aa).

3-14 provides a ligand contact to NAD(+); the sequence is ALHFGAGNIGRG.

This sequence belongs to the mannitol dehydrogenase family.

The catalysed reaction is D-mannitol 1-phosphate + NAD(+) = beta-D-fructose 6-phosphate + NADH + H(+). This is Mannitol-1-phosphate 5-dehydrogenase from Erwinia tasmaniensis (strain DSM 17950 / CFBP 7177 / CIP 109463 / NCPPB 4357 / Et1/99).